A 216-amino-acid chain; its full sequence is MNNMNIIIADDHPIVLFGIRKSLEQIEWVNVVGEFEDSTALINNLPKLDAHVLITDLSMPGDKYGDGITLIKYIKRHFPSLSIIVLTMNNNPAILSAVLDLDIEGIVLKQGAPTDLPKALAALQKGKKFTPESVSRLLEKISAGGYGDKRLSPKESEVLRLFAEGFLVTEIAKKLNRSIKTISSQKKSAMMKLGVENDIALLNYLSSVTLSPTDKE.

The region spanning 5 to 124 is the Response regulatory domain; sequence NIIIADDHPI…DLPKALAALQ (120 aa). The residue at position 56 (Asp56) is a 4-aspartylphosphate. The HTH luxR-type domain occupies 144–209; the sequence is GGYGDKRLSP…ALLNYLSSVT (66 aa). Residues 168 to 187 constitute a DNA-binding region (H-T-H motif); that stretch reads VTEIAKKLNRSIKTISSQKK.

It belongs to the RcsB family. In terms of assembly, interacts with RcsD and RcsA. Phosphorylated and activated by RcsD.

Its function is as follows. Component of the Rcs signaling system, which controls transcription of numerous genes. RcsB is the response regulator that binds to regulatory DNA regions. Can function both in an RcsA-dependent or RcsA-independent manner. This Salmonella typhi protein is Transcriptional regulatory protein RcsB.